Here is a 429-residue protein sequence, read N- to C-terminus: Histidine--tRNA ligase (429 aa).

It belongs to the class-II aminoacyl-tRNA synthetase family. Homodimer.

It is found in the cytoplasm. It catalyses the reaction tRNA(His) + L-histidine + ATP = L-histidyl-tRNA(His) + AMP + diphosphate + H(+). The polypeptide is Histidine--tRNA ligase (Streptococcus mutans serotype c (strain ATCC 700610 / UA159)).